The chain runs to 521 residues: Solute carrier family 35 member F4 (521 aa).

10 consecutive transmembrane segments (helical) span residues 160 to 180 (MVLK…SWVG), 192 to 212 (FYCP…FFPV), 248 to 266 (FLKR…NYLY), 277 to 297 (DVSA…WIVL), 301 to 321 (FMGV…MMAY), 330 to 350 (IIGV…KVLF), 365 to 385 (FVST…VILY), 395 to 417 (FAAL…NILV), 419 to 441 (VGVV…PGNA), and 450 to 470 (VIFN…FLLM). One can recognise an EamA domain in the interval 261 to 321 (LTNYLYLLAL…AITGIVMMAY (61 aa)).

Belongs to the SLC35F solute transporter family.

The protein localises to the membrane. Functionally, putative solute transporter. The sequence is that of Solute carrier family 35 member F4 (SLC35F4) from Homo sapiens (Human).